The following is a 213-amino-acid chain: Glycerol-3-phosphate acyltransferase (213 aa).

The next 6 membrane-spanning stretches (helical) occupy residues 4-24 (IILL…LWIG), 48-68 (ILGV…GTLA), 71-91 (LPLF…LAVI), 113-133 (VILG…IIVL), 144-164 (VIGA…GFIL), and 165-185 (TSYD…IILR).

The protein belongs to the PlsY family. As to quaternary structure, probably interacts with PlsX.

The protein localises to the cell membrane. The enzyme catalyses an acyl phosphate + sn-glycerol 3-phosphate = a 1-acyl-sn-glycero-3-phosphate + phosphate. The protein operates within lipid metabolism; phospholipid metabolism. Its function is as follows. Catalyzes the transfer of an acyl group from acyl-phosphate (acyl-PO(4)) to glycerol-3-phosphate (G3P) to form lysophosphatidic acid (LPA). This enzyme utilizes acyl-phosphate as fatty acyl donor, but not acyl-CoA or acyl-ACP. The polypeptide is Glycerol-3-phosphate acyltransferase (Lactococcus lactis subsp. lactis (strain IL1403) (Streptococcus lactis)).